A 264-amino-acid polypeptide reads, in one-letter code: Protein ADMETOS (264 aa).

Paternally imprinted expression in the endosperm.

Functionally, product of a dosage-sensitive gene that contributes to the maintenance of paternally and maternally imprinted gene expression in the endosperm in order to balance parental contributions. Underlies postzygotic reproductive isolation by promoting triploid seed arrest in a genetic dosage-dependent manner, thus being a component of postzygotic interploidy hybridization barriers. The sequence is that of Protein ADMETOS from Arabidopsis thaliana (Mouse-ear cress).